A 116-amino-acid chain; its full sequence is Large ribosomal subunit protein bL17 (116 aa).

Belongs to the bacterial ribosomal protein bL17 family. In terms of assembly, part of the 50S ribosomal subunit. Contacts protein L32.

This chain is Large ribosomal subunit protein bL17, found in Aliarcobacter butzleri (strain RM4018) (Arcobacter butzleri).